The chain runs to 193 residues: Guanylate kinase (193 aa).

One can recognise a Guanylate kinase-like domain in the interval Asp-12–Asn-191. Gly-19–Gly-26 contributes to the ATP binding site.

It belongs to the guanylate kinase family.

Its subcellular location is the cytoplasm. It catalyses the reaction GMP + ATP = GDP + ADP. Functionally, essential for recycling GMP and indirectly, cGMP. This is Guanylate kinase from Tropheryma whipplei (strain TW08/27) (Whipple's bacillus).